The sequence spans 251 residues: Putative cysteine-rich repeat secretory protein 36 (251 aa).

An N-terminal signal peptide occupies residues 1–28; it reads MHSSYSLSKCLVCFTILAIQTLIRRVSS. 2 consecutive Gnk2-homologous domains span residues 35-139 and 144-248; these read YLNH…NSPP and YENT…LYPF.

Belongs to the cysteine-rich repeat secretory protein family.

It is found in the secreted. The polypeptide is Putative cysteine-rich repeat secretory protein 36 (CRRSP36) (Arabidopsis thaliana (Mouse-ear cress)).